We begin with the raw amino-acid sequence, 247 residues long: Putative 2-succinyl-6-hydroxy-2,4-cyclohexadiene-1-carboxylate synthase (247 aa).

One can recognise an AB hydrolase-1 domain in the interval 4-229; sequence IIFLHGLLGT…CAGHNSHLEN (226 aa).

Belongs to the AB hydrolase superfamily. MenH family. Monomer.

It catalyses the reaction 5-enolpyruvoyl-6-hydroxy-2-succinyl-cyclohex-3-ene-1-carboxylate = (1R,6R)-6-hydroxy-2-succinyl-cyclohexa-2,4-diene-1-carboxylate + pyruvate. The protein operates within quinol/quinone metabolism; 1,4-dihydroxy-2-naphthoate biosynthesis; 1,4-dihydroxy-2-naphthoate from chorismate: step 3/7. Its pathway is quinol/quinone metabolism; menaquinone biosynthesis. In terms of biological role, catalyzes a proton abstraction reaction that results in 2,5-elimination of pyruvate from 2-succinyl-5-enolpyruvyl-6-hydroxy-3-cyclohexene-1-carboxylate (SEPHCHC) and the formation of 2-succinyl-6-hydroxy-2,4-cyclohexadiene-1-carboxylate (SHCHC). In Haemophilus influenzae (strain ATCC 51907 / DSM 11121 / KW20 / Rd), this protein is Putative 2-succinyl-6-hydroxy-2,4-cyclohexadiene-1-carboxylate synthase.